Here is a 150-residue protein sequence, read N- to C-terminus: Lymphotoxin-beta (150 aa).

Positions 1-149 constitute a THD domain; sequence AWITGQGLGW…GKTFFGAVMV (149 aa). A glycan (N-linked (GlcNAc...) asparagine) is linked at Asn-128.

Belongs to the tumor necrosis factor family. As to quaternary structure, heterotrimer of either two LTB and one LTA subunits or (less prevalent) two LTA and one LTB subunits.

It localises to the membrane. Cytokine that binds to LTBR/TNFRSF3. May play a specific role in immune response regulation. Provides the membrane anchor for the attachment of the heterotrimeric complex to the cell surface. This Sus scrofa (Pig) protein is Lymphotoxin-beta (LTB).